Reading from the N-terminus, the 258-residue chain is Regulatory protein RecX (258 aa).

It belongs to the RecX family.

The protein resides in the cytoplasm. Functionally, modulates RecA activity. The protein is Regulatory protein RecX of Streptococcus pyogenes serotype M2 (strain MGAS10270).